The primary structure comprises 279 residues: Urease accessory protein UreD (279 aa).

It belongs to the UreD family. As to quaternary structure, ureD, UreF and UreG form a complex that acts as a GTP-hydrolysis-dependent molecular chaperone, activating the urease apoprotein by helping to assemble the nickel containing metallocenter of UreC. The UreE protein probably delivers the nickel.

The protein localises to the cytoplasm. In terms of biological role, required for maturation of urease via the functional incorporation of the urease nickel metallocenter. This Streptococcus salivarius (strain 57.I) protein is Urease accessory protein UreD.